The chain runs to 357 residues: MATVKGGRVAVIGASGYGGLQTIRLLQGHPGLSVSFLGGERSAGQRWSSVCSFLPLPDDPKVESADPDRIAACSDFAVLSLPNGLACQLAPQLLERGVRVVDLSADFRYRSLEQWLQVYAKEAGSLNRQDAELCSSAVYGLPEWNGPAIADAKLVAAPGCFPTASLMPLLPFLKQGLIETSGIIIDAKTGTSGGGRVPKEAMLLAEASESIAPYGVIGHRHTSEIEQMAMEVAGQDIRLQFTPHLVPMVRGLLSTVYARLRDPGLTAEDCTTVLEAIYRHHPCVQVLPVGTYPATKWARHTNRALLSVQVDTRTGQLVLMSAIDNLIKGQAGQGVQCINLMAGLAPETGLPLQSFYP.

The active site involves cysteine 160.

The protein belongs to the NAGSA dehydrogenase family. Type 1 subfamily.

The protein localises to the cytoplasm. The catalysed reaction is N-acetyl-L-glutamate 5-semialdehyde + phosphate + NADP(+) = N-acetyl-L-glutamyl 5-phosphate + NADPH + H(+). The protein operates within amino-acid biosynthesis; L-arginine biosynthesis; N(2)-acetyl-L-ornithine from L-glutamate: step 3/4. Catalyzes the NADPH-dependent reduction of N-acetyl-5-glutamyl phosphate to yield N-acetyl-L-glutamate 5-semialdehyde. In Synechococcus sp. (strain CC9605), this protein is N-acetyl-gamma-glutamyl-phosphate reductase.